Here is a 70-residue protein sequence, read N- to C-terminus: Large ribosomal subunit protein uL29 (70 aa).

This sequence belongs to the universal ribosomal protein uL29 family.

The chain is Large ribosomal subunit protein uL29 from Prochlorococcus marinus (strain MIT 9313).